We begin with the raw amino-acid sequence, 287 residues long: ATP synthase gamma chain (287 aa).

Belongs to the ATPase gamma chain family. As to quaternary structure, F-type ATPases have 2 components, CF(1) - the catalytic core - and CF(0) - the membrane proton channel. CF(1) has five subunits: alpha(3), beta(3), gamma(1), delta(1), epsilon(1). CF(0) has three main subunits: a, b and c.

The protein localises to the cell inner membrane. Its function is as follows. Produces ATP from ADP in the presence of a proton gradient across the membrane. The gamma chain is believed to be important in regulating ATPase activity and the flow of protons through the CF(0) complex. This chain is ATP synthase gamma chain, found in Escherichia coli (strain 55989 / EAEC).